Reading from the N-terminus, the 208-residue chain is NAD(P)H dehydrogenase (quinone) (208 aa).

The 189-residue stretch at 4–192 (VLVLYYSSYG…DGARFQGRHV (189 aa)) folds into the Flavodoxin-like domain. Residues 10–15 (SSYGHV) and 78–80 (TRF) contribute to the FMN site. Tyr12 serves as a coordination point for NAD(+). Residue Trp98 coordinates substrate. FMN contacts are provided by residues 113–119 (STGSQHG) and His134. A disordered region spans residues 161-183 (YGASTLADDGDGGDRQPSANELD).

The protein belongs to the WrbA family. It depends on FMN as a cofactor.

It carries out the reaction a quinone + NADH + H(+) = a quinol + NAD(+). It catalyses the reaction a quinone + NADPH + H(+) = a quinol + NADP(+). This is NAD(P)H dehydrogenase (quinone) from Paracoccus denitrificans (strain Pd 1222).